Consider the following 163-residue polypeptide: Phosphopantetheine adenylyltransferase (163 aa).

A substrate-binding site is contributed by T11. Residues 11–12 (TF) and H19 each bind ATP. Positions 43, 75, and 89 each coordinate substrate. Residues 90-92 (GLR), E100, and 125-131 (YSFISST) contribute to the ATP site.

Belongs to the bacterial CoaD family. Homohexamer. Mg(2+) serves as cofactor.

The protein localises to the cytoplasm. The enzyme catalyses (R)-4'-phosphopantetheine + ATP + H(+) = 3'-dephospho-CoA + diphosphate. The protein operates within cofactor biosynthesis; coenzyme A biosynthesis; CoA from (R)-pantothenate: step 4/5. In terms of biological role, reversibly transfers an adenylyl group from ATP to 4'-phosphopantetheine, yielding dephospho-CoA (dPCoA) and pyrophosphate. The sequence is that of Phosphopantetheine adenylyltransferase from Acinetobacter baumannii (strain ACICU).